The primary structure comprises 92 residues: Small ribosomal subunit protein uS15c (92 aa).

The protein belongs to the universal ribosomal protein uS15 family. As to quaternary structure, part of the 30S ribosomal subunit.

It localises to the plastid. Its subcellular location is the chloroplast. The protein is Small ribosomal subunit protein uS15c (rps15) of Carica papaya (Papaya).